A 126-amino-acid polypeptide reads, in one-letter code: DNA-directed RNA polymerase I subunit RPA12 (126 aa).

Zn(2+)-binding residues include Cys20, Cys23, Cys38, Cys41, Cys87, and Cys90. The C4-type zinc-finger motif lies at 20–41 (CSDCGSVLPLPGAQDTVTCIRC). The TFIIS-type zinc-finger motif lies at 83–123 (VDRRCPRCGHEGMAYHTRQMRSADEGQTVFYTCTNCKFQEK). The short motif at 106 to 107 (DE) is the Hairpin element. Positions 115 and 118 each coordinate Zn(2+).

Belongs to the archaeal RpoM/eukaryotic RPA12/RPB9/RPC11 RNA polymerase family. In terms of assembly, component of the RNA polymerase I (Pol I) complex consisting of 13 subunits: a ten-subunit catalytic core composed of POLR1A/RPA1, POLR1B/RPA2, POLR1C/RPAC1, POLR1D/RPAC2, POLR1H/RPA12, POLR2E/RPABC1, POLR2F/RPABC2, POLR2H/RPABC3, POLR2K/RPABC4 and POLR2L/RPABC5; a mobile stalk subunit POLR1F/RPA43 protruding from the core and additional subunits homologous to general transcription factors POLR1E/RPA49 and POLR1G/RPA34. Part of Pol I pre-initiation complex (PIC), in which Pol I core assembles with RRN3 and promoter-bound UTBF and SL1/TIF-IB complex.

It localises to the nucleus. It is found in the nucleolus. In terms of biological role, core component of RNA polymerase I (Pol I), a DNA-dependent RNA polymerase which synthesizes ribosomal RNA precursors using the four ribonucleoside triphosphates as substrates. Can mediate Pol I proofreading of the nascent RNA transcript. Anchors into the Pol I active site to monitor transcription fidelity and cleave mis-incorporated 5'-ribonucleotides. In Homo sapiens (Human), this protein is DNA-directed RNA polymerase I subunit RPA12.